We begin with the raw amino-acid sequence, 401 residues long: Probable 2,3-bisphosphoglycerate-independent phosphoglycerate mutase (401 aa).

This sequence belongs to the BPG-independent phosphoglycerate mutase family. A-PGAM subfamily.

It carries out the reaction (2R)-2-phosphoglycerate = (2R)-3-phosphoglycerate. Its pathway is carbohydrate degradation; glycolysis; pyruvate from D-glyceraldehyde 3-phosphate: step 3/5. In terms of biological role, catalyzes the interconversion of 2-phosphoglycerate and 3-phosphoglycerate. The polypeptide is Probable 2,3-bisphosphoglycerate-independent phosphoglycerate mutase (Thermotoga petrophila (strain ATCC BAA-488 / DSM 13995 / JCM 10881 / RKU-1)).